Consider the following 340-residue polypeptide: Melanin-concentrating hormone receptor 2 (340 aa).

The Extracellular portion of the chain corresponds to 1-34; sequence MNPFHSSCWNTSAELSNKSWNKEFAYQTASAVDT. N-linked (GlcNAc...) asparagine glycans are attached at residues N10 and N17. The helical transmembrane segment at 35–57 threads the bilayer; it reads VILPSMIGIICSTGLVGNILIVF. Residues 58–69 are Cytoplasmic-facing; that stretch reads TIIRSRKKTVPD. The helical transmembrane segment at 70–92 threads the bilayer; the sequence is IYICNLAVADLVHIIGMPFLIHQ. Over 93 to 106 the chain is Extracellular; it reads WARGGEWVFGGPLC. A helical transmembrane segment spans residues 107–129; that stretch reads TIITSLDTCNQFACSAIMTVMSV. At 130–149 the chain is on the cytoplasmic side; that stretch reads DRYFALVQPFRLTSWRTRYK. The chain crosses the membrane as a helical span at residues 150 to 172; that stretch reads TIRINLGLWAASFILALPVWIYS. At 173–198 the chain is on the extracellular side; it reads KVIKFKDGVESCAFDLTSPDDVLWYT. A helical membrane pass occupies residues 199–221; sequence LYLTITTFFFPLPLILVCYILIL. The Cytoplasmic portion of the chain corresponds to 222 to 252; sequence CYTWEMYQQNKDARCCNPSVPKQRVMKLTKM. Residues 253–272 traverse the membrane as a helical segment; it reads VLVLVAVFILSAAPYHVIQL. Residues 273-286 are Extracellular-facing; sequence VNLQMEQPTLAFYV. The chain crosses the membrane as a helical span at residues 287-309; sequence GYYLSICLSYASSSINPFLYILL. At 310 to 340 the chain is on the cytoplasmic side; that stretch reads SGNFQKRLPQIQRRVTDKEIKNMGNTLKSHF.

Belongs to the G-protein coupled receptor 1 family.

The protein localises to the cell membrane. Functionally, receptor for melanin-concentrating hormone, coupled to G proteins that activate phosphoinositide hydrolysis. This is Melanin-concentrating hormone receptor 2 (MCHR2) from Macaca fascicularis (Crab-eating macaque).